Here is a 236-residue protein sequence, read N- to C-terminus: Purine nucleoside phosphorylase DeoD-type (236 aa).

H4 contacts a purine D-ribonucleoside. Phosphate is bound by residues G20, R24, R43, and 87-90; that span reads RVGT. A purine D-ribonucleoside contacts are provided by residues 179-181 and 203-204; these read EME and SD. Catalysis depends on D204, which acts as the Proton donor.

This sequence belongs to the PNP/UDP phosphorylase family. As to quaternary structure, homohexamer; trimer of homodimers.

The catalysed reaction is a purine D-ribonucleoside + phosphate = a purine nucleobase + alpha-D-ribose 1-phosphate. It catalyses the reaction a purine 2'-deoxy-D-ribonucleoside + phosphate = a purine nucleobase + 2-deoxy-alpha-D-ribose 1-phosphate. Its function is as follows. Catalyzes the reversible phosphorolytic breakdown of the N-glycosidic bond in the beta-(deoxy)ribonucleoside molecules, with the formation of the corresponding free purine bases and pentose-1-phosphate. The protein is Purine nucleoside phosphorylase DeoD-type of Streptococcus pneumoniae serotype 2 (strain D39 / NCTC 7466).